The primary structure comprises 844 residues: MADSDDEHDRRRRDKFRRERSDYDRSREREERRRDDWSDREWDRGRERRSRGEYRDYESRSRRDRFSPQRHDISPPQKRMRRDWDDHGSDPYHSGYEMPYSSSAGPAYGPPQPWGHPEMHVMQHHGIPIQARLGNLHDVDLGTPAPTMKTFKEFLLSLEDSVDETEAVKRYNDYKIDFRRQQMQEFFLAHKDEEWFRSKYHPDEVGKHKQESRASLHNRLNAFMFLMENSWLNEVQLDIAQSTAIIKVLDAAVIKMEGGTEIDLKILDEEEEEAKREAAKKEEARVTETEKVITEEKEAPAKPEKDKEPESEEKPVKPEEEEEKKVEKEEPERETRKPGTRKRKRSGDSDDGSDSESDTETASPKPETPNQNGCEDTPKKEEETEKPKEKPKEDTVKPRPLHKTCSIFMRNIPPNISKAEITALCKRYPGFMRVALSEPQPERRFLRKAYVTFDRSVNIKEICWSVQNIRLRECELSPGVNRDLTYRVRNINGITLHRPIVRNDIKLAARLIHALDERAQLWEGEQGDQVVSAQNPILKNITDYLIDEVNAEEEELLSSAGRTPETEAPKEGNPTEITVERDEKLIKVLDKLLFYLRIVHSVDYYNTCEYPNEDEMPTRCGMMHVRGPLPPNRVSHGEVTEWQKTIEEKLAPLFAVRETLSEDEAMKMGKKDPEQEAEKFVTANTQELGKEKWLCPLSGKKFKGPEFVRKHIFNKHAEKIEEVKKEVEFFNNYLTDSKRPALPEVKPLQPPGGAAGQALAAGLLYPPQGPQALLPYGQPRPPVLGYGGAPQFPPNPYGAGRGNYDSFRGQGMYPGKPRNRMMRGDPRSIIEYRDLDAPDDVDFF.

Disordered regions lie at residues Met-1 to Asp-90, Glu-277 to Leu-401, Glu-555 to Thr-575, and Pro-794 to Asp-825. 2 stretches are compositionally biased toward basic and acidic residues: residues Phe-16–Ile-73 and Glu-277–Lys-337. Residues Ser-349–Thr-359 show a composition bias toward acidic residues. Residues Asp-376–Lys-397 show a composition bias toward basic and acidic residues.

This sequence belongs to the ARS2 family. As to quaternary structure, interacts ncbp1/cbp80.

It localises to the nucleus. The protein resides in the nucleoplasm. It is found in the cytoplasm. Its function is as follows. Acts as a mediator between the cap-binding complex (CBC) and the primary microRNAs (miRNAs) processing machinery during cell proliferation. Contributes to the stability and delivery of capped primary miRNA transcripts to the primary miRNA processing complex, thereby playing a role in RNA-mediated gene silencing (RNAi) by miRNAs. The polypeptide is Serrate RNA effector molecule homolog B (srrt-b) (Xenopus laevis (African clawed frog)).